A 268-amino-acid polypeptide reads, in one-letter code: MRKKTYAMRYVAGQPAERIFPPEALLHVGAELEPCVPLIHGSRLKVLVWNIFKQQRAEWLSVLQNFGKDAHLVLLQEAQTTPELVRFATTHYLVADQVPAYVLPQHPSGVMTLASAHAVYCCPLREREPLLRLSKSALVTAYPLPNEQVLMVVNIHAVNFSLGIDVYSKQLGPIGEQIIHHKGPVIIAGDFNAWSRQRINALYRFAREMGLREVRFTDDHRRKAFGRPLDFIFYRGMGVAEASVLVTRASDHNPLLVEFDVHTSKSLS.

The protein belongs to the UPF0294 family.

The protein localises to the cytoplasm. This chain is UPF0294 protein ETA_26410, found in Erwinia tasmaniensis (strain DSM 17950 / CFBP 7177 / CIP 109463 / NCPPB 4357 / Et1/99).